The primary structure comprises 260 residues: Neuraminyllactose-binding hemagglutinin (260 aa).

The signal sequence occupies residues 1–27 (MKTNGHFKDFAWKKCLLGASVGALLVG). Cysteine 28 is lipidated: N-palmitoyl cysteine. Cysteine 28 is lipidated: S-diacylglycerol cysteine. The segment at 134-139 (KRTIQK) is N-acetyl-neuraminyl-alpha(2,3)-lactose binding motif.

It is found in the cell outer membrane. The sequence is that of Neuraminyllactose-binding hemagglutinin (hpaA) from Helicobacter pylori (Campylobacter pylori).